Here is a 1357-residue protein sequence, read N- to C-terminus: DNA-directed RNA polymerase subunit beta (1357 aa).

The protein belongs to the RNA polymerase beta chain family. As to quaternary structure, the RNAP catalytic core consists of 2 alpha, 1 beta, 1 beta' and 1 omega subunit. When a sigma factor is associated with the core the holoenzyme is formed, which can initiate transcription.

The enzyme catalyses RNA(n) + a ribonucleoside 5'-triphosphate = RNA(n+1) + diphosphate. DNA-dependent RNA polymerase catalyzes the transcription of DNA into RNA using the four ribonucleoside triphosphates as substrates. The polypeptide is DNA-directed RNA polymerase subunit beta (Pseudomonas fluorescens (strain ATCC BAA-477 / NRRL B-23932 / Pf-5)).